The sequence spans 94 residues: Fungal defensin scedosporisin-2 (94 aa).

Residues 1–25 form the signal peptide; sequence MKFSNISIAALFTILASTAMAAPAA. The propeptide occupies 26 to 56; it reads DSPDSIVAREPAPVEETYEAPSGLEKRGFGC. Beta-D-GlcNAc-(1-&gt;4)-Mur2Ac(oyl-L-Ala-gamma-D-Glu-L-Lys-D-Ala-D-Ala)-di-trans,octa-cis-undecaprenyl diphosphate is bound by residues Phe54, Gly55, and Cys56. 3 disulfides stabilise this stretch: Cys56/Cys78, Cys63/Cys91, and Cys67/Cys93. Residues 57 to 60 are interaction site with membrane interface; it reads PGSE. Residue His66 coordinates beta-D-GlcNAc-(1-&gt;4)-Mur2Ac(oyl-L-Ala-gamma-D-Glu-L-Lys-D-Ala-D-Ala)-di-trans,octa-cis-undecaprenyl diphosphate. The interval 83–90 is interaction site with membrane interface; the sequence is IPFVGRPR. Cys91 contacts beta-D-GlcNAc-(1-&gt;4)-Mur2Ac(oyl-L-Ala-gamma-D-Glu-L-Lys-D-Ala-D-Ala)-di-trans,octa-cis-undecaprenyl diphosphate.

This sequence belongs to the invertebrate defensin family.

Its subcellular location is the secreted. It localises to the target cell membrane. Antibacterial peptide potently active against Gram-positive bacteria. May act by selectively inhibiting peptidoglycan biosynthesis through complex formation with the cell wall precursor lipid II (1:1 molar ratio) thus inhibiting cell wall synthesis. Shows remarkably activity against resistant isolates such as methicillin-resistant Staphylococcus aureus (MRSA) and vancomycin-resistant Enterococci (VRE) at the concentration of micromolar level. Does not act by destroying the membrane integrity, which is consistent with its nonamphiphilic architecture. Acts more rapidly than vancomycin. Shows low hemolysis and cytotoxicity and high serum stability. In vivo, is as efficient as vancomycin to protect mouse peritonitis models from MRSA infections. This Pseudallescheria apiosperma (Scedosporium apiospermum) protein is Fungal defensin scedosporisin-2.